A 333-amino-acid polypeptide reads, in one-letter code: Large ribosomal subunit protein mL44 (333 aa).

The N-terminal 30 residues, 1–30 (MASAVFRLLQQGPRRLLAPAVPTLAPPVRG), are a transit peptide targeting the mitochondrion. Residues 86 to 228 (DLLKTAFINS…LITQMTGKEL (143 aa)) enclose the RNase III domain. The DRBM domain occupies 236–306 (NPMGLLVEEL…ARVALRKLYG (71 aa)). A compositionally biased stretch (basic and acidic residues) spans 311–327 (RRPWDYSKPKESPKRAE). The interval 311–333 (RRPWDYSKPKESPKRAEQTSVAS) is disordered.

The protein belongs to the ribonuclease III family. Mitochondrion-specific ribosomal protein mL44 subfamily. In terms of assembly, component of the mitochondrial ribosome large subunit (39S) which comprises a 16S rRNA and about 50 distinct proteins.

The protein localises to the mitochondrion. Component of the 39S subunit of mitochondrial ribosome. May have a function in the assembly/stability of nascent mitochondrial polypeptides exiting the ribosome. The protein is Large ribosomal subunit protein mL44 (Mrpl44) of Mus musculus (Mouse).